Reading from the N-terminus, the 1054-residue chain is NACHT, LRR and PYD domains-containing protein 12 (1054 aa).

One can recognise a Pyrin domain in the interval 1 to 95 (MLPSTARDGL…WERGQGEDLV (95 aa)). The 73-residue stretch at 129 to 201 (YKDYVRRKFQ…SPIQMETLFE (73 aa)) folds into the FISNA domain. One can recognise an NACHT domain in the interval 211–528 (HTVVLQGAAG…EFFAAMYCAL (318 aa)). 217–224 (GAAGMGKS) is a binding site for ATP. LRR repeat units lie at residues 821-841 (YLVE…KLLC), 850-871 (RLRT…DLAS), 878-899 (SLLE…LLCE), 907-928 (KLQT…GIAS), 935-955 (CLQE…QLLG), 964-985 (RLQK…DLSS), 992-1013 (TLHE…LLCK), and 1021-1042 (KLRV…RMAA).

Belongs to the NLRP family. Interacts (via pyrin domain) with ASC. Interacts (via pyrin domain) with FAF1 (via UBA domain). Interacts with MAP3K14; this interaction promotes proteasomal degradation of MAP3K14. Interacts with NOD2; this interaction promotes degradation of NOD2 through the ubiquitin-proteasome pathway. Interacts with HSPA1A and HSPA8. Interacts with HSP90AA1. Interacts with TRIM25; this interaction inhibits RIGI-mediated signaling pathway. As to expression, mainly expressed in dendritic cells (DCs) and neutrophils.

The protein resides in the cytoplasm. Its function is as follows. Plays an essential role as an potent mitigator of inflammation. Primarily expressed in dendritic cells and macrophages, inhibits both canonical and non-canonical NF-kappa-B and ERK activation pathways. Functions as a negative regulator of NOD2 by targeting it to degradation via the proteasome pathway. In turn, promotes bacterial tolerance. Also inhibits the RIGI-mediated immune signaling against RNA viruses by reducing the E3 ubiquitin ligase TRIM25-mediated 'Lys-63'-linked RIGI activation but enhancing the E3 ubiquitin ligase RNF125-mediated 'Lys-48'-linked RIGI degradation. Also acts as a negative regulator of inflammatory response to mitigate obesity and obesity-associated diseases in adipose tissue. This is NACHT, LRR and PYD domains-containing protein 12 (Nlrp12) from Mus musculus (Mouse).